A 267-amino-acid polypeptide reads, in one-letter code: Cilia- and flagella-associated protein 300 (267 aa).

Belongs to the CFAP300 family. As to quaternary structure, interacts with DNAAF2. Expressed in the left-right organiser (LRO) node at 8.25 dpc.

It localises to the cytoplasm. Its subcellular location is the cytoskeleton. It is found in the cilium axoneme. Cilium- and flagellum-specific protein that plays a role in axonemal structure organization and motility. May play a role in outer and inner dynein arm assembly. The chain is Cilia- and flagella-associated protein 300 from Mus musculus (Mouse).